The chain runs to 379 residues: Alcohol dehydrogenase 2 (379 aa).

8 residues coordinate Zn(2+): C47, T49, H69, C99, C102, C105, C113, and C177. 2 residues coordinate an alcohol: T49 and H69. T49 is an NAD(+) binding site. NAD(+)-binding positions include 202–207, D226, K231, T272, V295, 295–297, F322, and R372; these read GLGAVG and VGV.

The protein belongs to the zinc-containing alcohol dehydrogenase family. In terms of assembly, homodimer. The cofactor is Zn(2+).

It is found in the cytoplasm. The enzyme catalyses a primary alcohol + NAD(+) = an aldehyde + NADH + H(+). It catalyses the reaction a secondary alcohol + NAD(+) = a ketone + NADH + H(+). The polypeptide is Alcohol dehydrogenase 2 (ADH2) (Zea mays (Maize)).